Reading from the N-terminus, the 112-residue chain is High mobility group protein D (112 aa).

Residues 5 to 71 (PKRPLSAYML…DYDRAVKEFE (67 aa)) constitute a DNA-binding region (HMG box). Ser-10 carries the post-translational modification Phosphoserine. A Phosphotyrosine modification is found at Tyr-12. Residues 72-112 (ANGGSSAANGGGAKKRAKPAKKVAKKSKKEESDEDDDDESE) form a disordered region. Positions 84-98 (AKKRAKPAKKVAKKS) are enriched in basic residues. Phosphoserine occurs at positions 103 and 111. Residues 103 to 112 (SDEDDDDESE) show a composition bias toward acidic residues.

This sequence belongs to the HMGB family.

Its subcellular location is the nucleus. The protein resides in the chromosome. In terms of biological role, binds preferentially single-stranded DNA and unwinds double-stranded DNA. Prefers sites containing the sequence 5'-ttg-3'. Facilitates DNA bending. Associated with early embryonic chromatin in the absence of histone H1. This chain is High mobility group protein D (HmgD), found in Drosophila melanogaster (Fruit fly).